The primary structure comprises 230 residues: MAMVGRSLLLLLLLVTLAAGHGVVVVVAFDPNPLQDFCVADPTSKVRVNGLPCKDPAAVTADDFFFSGVGEPAAGGGRGATASRRYGFTARSVDIPGLNTLGASAARVDVAPGGVFPPHYHPRASETAVVLAGAVYFGFVTSYPDSRVVAKVLRRGDVFAVPQGLVHFLHNNGSEPAALYASLSSQNPGLVLVADALLAAPLPVDLVAKTLLTDEATVDKIRANFIVHRS.

The signal sequence occupies residues 1–20; it reads MAMVGRSLLLLLLLVTLAAG. Cys38 and Cys53 are joined by a disulfide. The region spanning 86-219 is the Cupin type-1 domain; the sequence is YGFTARSVDI…TLLTDEATVD (134 aa). The Mn(2+) site is built by His119, His121, Glu126, and His167. N-linked (GlcNAc...) asparagine glycosylation is present at Asn172.

This sequence belongs to the germin family. In terms of assembly, oligomer (believed to be a pentamer but probably hexamer).

It localises to the secreted. Its subcellular location is the extracellular space. The protein resides in the apoplast. Its function is as follows. May play a role in plant defense. Probably has no oxalate oxidase activity even if the active site is conserved. In Oryza sativa subsp. japonica (Rice), this protein is Germin-like protein 5-1.